A 217-amino-acid chain; its full sequence is Adenylate kinase (217 aa).

An ATP-binding site is contributed by 10–15 (GIGKGT). The NMP stretch occupies residues 30-59 (ATGDIFRKNFKENTELGILIKKIIAQGLLV). AMP-binding positions include threonine 31, arginine 36, 57-59 (LLV), 85-88 (GFPR), and glutamine 92. The tract at residues 126–163 (GRRICPECGKVYHIENIPPKTPGICDKDQKTLIQREDD) is LID. Position 127 (arginine 127) interacts with ATP. Residues cysteine 130 and cysteine 133 each coordinate Zn(2+). 136 to 137 (VY) serves as a coordination point for ATP. Positions 150 and 153 each coordinate Zn(2+). The AMP site is built by arginine 160 and arginine 171. Glutamine 199 is a binding site for ATP.

This sequence belongs to the adenylate kinase family. Monomer.

Its subcellular location is the cytoplasm. It catalyses the reaction AMP + ATP = 2 ADP. Its pathway is purine metabolism; AMP biosynthesis via salvage pathway; AMP from ADP: step 1/1. Functionally, catalyzes the reversible transfer of the terminal phosphate group between ATP and AMP. Plays an important role in cellular energy homeostasis and in adenine nucleotide metabolism. This is Adenylate kinase from Onion yellows phytoplasma (strain OY-M).